The following is a 345-amino-acid chain: UPF0324 membrane protein HH_1161 (345 aa).

The next 10 membrane-spanning stretches (helical) occupy residues Gly7–Leu29, Leu33–Tyr50, Leu90–Ile112, Ile122–Leu141, Val154–Ala176, Trp186–Pro208, Ile215–Phe237, Leu262–Ile281, Phe293–Trp312, and Thr322–Met344.

The protein belongs to the UPF0324 family.

The protein localises to the cell membrane. The chain is UPF0324 membrane protein HH_1161 from Helicobacter hepaticus (strain ATCC 51449 / 3B1).